The chain runs to 92 residues: MAKGQSLQDPFLNALRRERVPVSVYLVNGIKLQGTIESFDQFVVLLRNTVSQMVYKHAISTVVPARNVRVGPGGGYVQSNEGNQAEDDDVEQ.

The region spanning 9-68 is the Sm domain; the sequence is DPFLNALRRERVPVSVYLVNGIKLQGTIESFDQFVVLLRNTVSQMVYKHAISTVVPARNV. The disordered stretch occupies residues 73–92; that stretch reads GGGYVQSNEGNQAEDDDVEQ.

The protein belongs to the Hfq family. Homohexamer.

Its function is as follows. RNA chaperone that binds small regulatory RNA (sRNAs) and mRNAs to facilitate mRNA translational regulation in response to envelope stress, environmental stress and changes in metabolite concentrations. Also binds with high specificity to tRNAs. This chain is RNA-binding protein Hfq, found in Xanthomonas axonopodis pv. citri (strain 306).